Here is a 120-residue protein sequence, read N- to C-terminus: UPF0344 protein LMOf2365_2298 (120 aa).

The next 4 helical transmembrane spans lie at 3 to 23 (GYIH…ALLI), 33 to 53 (MLQM…IMMV), 62 to 82 (ILAI…EMLL), and 92 to 112 (GMFL…GFYL).

Belongs to the UPF0344 family.

Its subcellular location is the cell membrane. In Listeria monocytogenes serotype 4b (strain F2365), this protein is UPF0344 protein LMOf2365_2298.